Reading from the N-terminus, the 361-residue chain is Peptide chain release factor 1 (361 aa).

N5-methylglutamine is present on glutamine 237. Residues 287-297 (KQQKEQSDTRK) show a composition bias toward basic and acidic residues. The tract at residues 287–313 (KQQKEQSDTRKSLVGSGDRSERIRTYN) is disordered.

The protein belongs to the prokaryotic/mitochondrial release factor family. Post-translationally, methylated by PrmC. Methylation increases the termination efficiency of RF1.

It is found in the cytoplasm. Its function is as follows. Peptide chain release factor 1 directs the termination of translation in response to the peptide chain termination codons UAG and UAA. This chain is Peptide chain release factor 1, found in Francisella tularensis subsp. tularensis (strain FSC 198).